The following is a 364-amino-acid chain: Aminomethyltransferase (364 aa).

This sequence belongs to the GcvT family. As to quaternary structure, the glycine cleavage system is composed of four proteins: P, T, L and H.

The catalysed reaction is N(6)-[(R)-S(8)-aminomethyldihydrolipoyl]-L-lysyl-[protein] + (6S)-5,6,7,8-tetrahydrofolate = N(6)-[(R)-dihydrolipoyl]-L-lysyl-[protein] + (6R)-5,10-methylene-5,6,7,8-tetrahydrofolate + NH4(+). Functionally, the glycine cleavage system catalyzes the degradation of glycine. This Escherichia coli O127:H6 (strain E2348/69 / EPEC) protein is Aminomethyltransferase.